Reading from the N-terminus, the 409-residue chain is Lactadherin (409 aa).

2 EGF-like domains span residues 2–41 (SGDF…LICN) and 44–88 (EKGP…IHCE). 3 disulfide bridges follow: Cys6–Cys17, Cys11–Cys29, and Cys31–Cys40. Residue Asn41 is glycosylated (N-linked (GlcNAc...) asparagine). Cystine bridges form between Cys48/Cys59, Cys53/Cys76, Cys78/Cys87, Cys91/Cys247, Cys234/Cys238, and Cys252/Cys409. The short motif at 67 to 69 (RGD) is the Cell attachment site element. 2 F5/8 type C domains span residues 91–247 (CNAP…LLGC) and 252–409 (CAEP…LLGC). A glycan (N-linked (GlcNAc...) asparagine) is linked at Asn372.

Mammary epithelial cell surfaces and spermatozoan. Also present in testis, epididymis, uterus, adrenal gland, tonsil, muscle, heart, lymphatic gland, thymus and kidney but not spleen, liver, lung or brain.

It localises to the membrane. The protein resides in the secreted. Its subcellular location is the cytoplasmic vesicle. The protein localises to the secretory vesicle. It is found in the acrosome membrane. Contributes to phagocytic removal of apoptotic cells in many tissues. Plays an important role in the maintenance of intestinal epithelial homeostasis and the promotion of mucosal healing. Promotes VEGF-dependent neovascularization. Specific ligand for the alpha-v/beta-3 and alpha-v/beta-5 receptors. Also binds to phosphatidylserine-enriched cell surfaces in a receptor-independent manner. Zona pellucida-binding protein which may play a role in gamete interaction. The sequence is that of Lactadherin (MFGE8) from Sus scrofa (Pig).